The chain runs to 389 residues: Dirigent protein 25 (389 aa).

The first 21 residues, 1-21 (MAGCKVLFFLILALAITFVSA), serve as a signal peptide directing secretion. 3 stretches are compositionally biased toward low complexity: residues 50-68 (GPFP…SGTG), 77-86 (LGTNTGPGPL), and 98-135 (SSGT…PLPT). A disordered region spans residues 50 to 135 (GPFPTANSGP…PGSGSGPLPT (86 aa)).

Belongs to the plant dirigent protein family. As to quaternary structure, homodimer.

It localises to the secreted. Its subcellular location is the extracellular space. It is found in the apoplast. Functionally, dirigent proteins impart stereoselectivity on the phenoxy radical-coupling reaction, yielding optically active lignans from two molecules of coniferyl alcohol in the biosynthesis of lignans, flavonolignans, and alkaloids and thus plays a central role in plant secondary metabolism. The sequence is that of Dirigent protein 25 (DIR25) from Arabidopsis thaliana (Mouse-ear cress).